A 243-amino-acid polypeptide reads, in one-letter code: Uridylate kinase (243 aa).

ATP is bound at residue 15 to 18; the sequence is KLSG. Residue G56 coordinates UMP. G57 and R61 together coordinate ATP. 138-145 contacts UMP; it reads TGNPYFST. Positions 166, 172, and 175 each coordinate ATP.

It belongs to the UMP kinase family. Homohexamer.

The protein localises to the cytoplasm. The enzyme catalyses UMP + ATP = UDP + ADP. It functions in the pathway pyrimidine metabolism; CTP biosynthesis via de novo pathway; UDP from UMP (UMPK route): step 1/1. With respect to regulation, inhibited by UTP. Functionally, catalyzes the reversible phosphorylation of UMP to UDP. The chain is Uridylate kinase from Mycoplasma genitalium (strain ATCC 33530 / DSM 19775 / NCTC 10195 / G37) (Mycoplasmoides genitalium).